We begin with the raw amino-acid sequence, 132 residues long: uncharacterized protein (132 aa).

Residues 1–17 form the signal peptide; sequence MCPECFFLMLFFCGYRA. A compositionally biased stretch (low complexity) spans 25 to 39; it reads SSSSSSSSSSSFRSS. Residues 25–79 are disordered; that stretch reads SSSSSSSSSSSFRSSPAYGFSGRPPGGAGCRERSQRSCLRPGGLPSLTRNPGLQR.

This is an uncharacterized protein from Escherichia coli (strain K12).